A 603-amino-acid polypeptide reads, in one-letter code: uncharacterized protein (603 aa).

A disordered region spans residues 257-281 (AGEAASSDHDQKISRVTRKRPREPK).

This is an uncharacterized protein from Saccharomyces cerevisiae (strain ATCC 204508 / S288c) (Baker's yeast).